The chain runs to 281 residues: Small ribosomal subunit protein uS2 (281 aa).

Residues 229–281 (RSGANKTEGEAAEQPMAAWEKELLTNEAPAEASAEAAAPAAAEGETAEAPKAE) are disordered. Residues 255–275 (EAPAEASAEAAAPAAAEGETA) show a composition bias toward low complexity.

Belongs to the universal ribosomal protein uS2 family.

This chain is Small ribosomal subunit protein uS2, found in Bifidobacterium longum subsp. infantis (strain ATCC 15697 / DSM 20088 / JCM 1222 / NCTC 11817 / S12).